Consider the following 184-residue polypeptide: Cytochrome c homolog (184 aa).

At 1 to 10 (MDSFELNKIL) the chain is on the cytoplasmic side. The chain crosses the membrane as a helical; Signal-anchor span at residues 11 to 31 (GAVLGTCLILLVTSFTANALF). The Periplasmic portion of the chain corresponds to 32-184 (SPKMPEKPGF…HPKPLPTASK (153 aa)). Residues cysteine 84, cysteine 87, histidine 88, and methionine 151 each contribute to the heme c site.

It belongs to the cytochrome c family. Post-translationally, binds 1 heme c group covalently per subunit.

Its subcellular location is the cell membrane. Functionally, may be involved in electron transfer from bc1 complex to aa3. This is Cytochrome c homolog (cycM) from Bradyrhizobium diazoefficiens (strain JCM 10833 / BCRC 13528 / IAM 13628 / NBRC 14792 / USDA 110).